We begin with the raw amino-acid sequence, 171 residues long: MPNSPQNPSRKALYTEEERARRDATPWTLVQAILAPLQFLAFGVSLVLVVRFLFTGEGYEAATISILIKTLLLYTIMVTGAIWEKVVFGQYLFAPAFFWEDVFSFGVIALHTAYLWALFTGQPDNMQMFIALAAYATYVINAGQFLWKLRQARLQAASEDAGTLVMERGTR.

It participates in porphyrin-containing compound metabolism; bacteriochlorophyll biosynthesis (light-independent). The polypeptide is 2-vinyl bacteriochlorophyllide hydratase (bchF) (Rhodobacter capsulatus (strain ATCC BAA-309 / NBRC 16581 / SB1003)).